The following is a 517-amino-acid chain: RNA-binding region-containing protein 3 (517 aa).

The interval 1 to 26 (MAAPEQPLAISRGCTSSSSLSPPRGD) is disordered. Serine 21 is modified (phosphoserine). Residues 27 to 102 (RTLLVRHLPA…HTLVVEFAKE (76 aa)) enclose the RRM 1 domain. Disordered stretches follow at residues 106–130 (VHSP…DDKE) and 213–254 (MPLH…DEDR). Phosphoserine is present on serine 108. Residues 115–130 (SEKKKRSDDPVEDDKE) are compositionally biased toward basic and acidic residues. The segment covering 217–230 (APLPPTSPQPPEEP) has biased composition (pro residues). Acidic residues predominate over residues 231 to 252 (PLPEEDEELSSEESEYESTDDE). The RRM 2 domain occupies 420 to 503 (CRIYVKNLAK…KPMVVQFARS (84 aa)).

Component of the U11/U12 snRNPs that are part of the U12-type spliceosome. Found in a complex with m(7)G-capped U12 snRNA. Interacts with PDCD7.

The protein localises to the nucleus. In terms of biological role, participates in pre-mRNA U12-dependent splicing, performed by the minor spliceosome which removes U12-type introns. U12-type introns comprises less than 1% of all non-coding sequences. Binds to the 3'-stem-loop of m(7)G-capped U12 snRNA. The polypeptide is RNA-binding region-containing protein 3 (RNPC3) (Pongo abelii (Sumatran orangutan)).